The sequence spans 105 residues: MSPLKKTYVLKLYVAGNTPNSVRALKTLNNILEQEFQGVYALKVIDVLKNPQLAEEDKILATPTLAKILPPPVRKIIGDLSDREKVLIGLDLLYEEFAEAEAEAE.

It belongs to the KaiB family. In terms of assembly, the KaiABC complex composition changes during the circadian cycle to control KaiC phosphorylation. Complexes KaiC(6), KaiA(2-4):KaiC(6), KaiB(6):KaiC(6) and KaiC(6):KaiB(6):KaiA(12) are among the most important forms, many form cooperatively. Undergoes a major conformational rearrangment; in the free state forms homotetramers as a dimer of dimers. When bound to the CI domain of KaiC switches to a monomeric thioredoxin-fold (KaiB(fs)). KaiB(fs) binds CikA, leading it to dephosphorylate phospho-RpaA.

Functionally, key component of the KaiABC oscillator complex, which constitutes the main circadian regulator in cyanobacteria. Complex composition changes during the circadian cycle to control KaiC phosphorylation. KaiA stimulates KaiC autophosphorylation, while KaiB sequesters KaiA, leading to KaiC autodephosphorylation. Phospho-Ser-431 KaiC accumulation triggers binding of KaiB to form the KaiB(6):KaiC(6) complex, leading to changes in output regulators CikA and SasA. KaiB switches to a thioredoxin-like fold (KaiB(fs)) when bound to KaiC. KaiB(6):KaiC(6) formation exposes a site for KaiA binding that sequesters KaiA from KaiC, making the KaiC(6):KaiB(6):KaiA(12) complex that results in KaiC autodephosphorylation. In terms of biological role, a metamorphic protein which reversibly switches between an inactive tetrameric fold and a rare, thioredoxin-like monomeric fold (KaiB(fs)). KaiB(fs) binds phospho-KaiC, KaiA and CikA. KaiA and CikA compete for binding to KaiB(fs), and KaiB(fs) and SasA compete for binding to KaiC, thus the clock oscillator and output signal pathway are tightly coupled. The protein is Circadian clock oscillator protein KaiB of Cyanothece sp. (strain PCC 7425 / ATCC 29141).